Consider the following 237-residue polypeptide: MIIIPAVDIKNGKCVQLVQGEPGTEQVVIENPAEVAKQWEQKGAKKLHIVDLDGALGSGRNLSIVKEIIEKTKSPIQLGGGIRSVSDAKKLLEIGVNTVIIGTMAIKNPEIIKELSSEYGCERICVSLDSKNNKVVTHGWKESTDKTPIEYAKLFEKMGAGSILFTNVDVEGLLNGINLEPIKELLNNVSIPIIYSGGITSVDDLKVLSDIGVDYVVIGSALYKGLITLEDALKYQK.

Catalysis depends on Asp-8, which acts as the Proton acceptor. Catalysis depends on Asp-129, which acts as the Proton donor.

It belongs to the HisA/HisF family.

The protein localises to the cytoplasm. It catalyses the reaction 1-(5-phospho-beta-D-ribosyl)-5-[(5-phospho-beta-D-ribosylamino)methylideneamino]imidazole-4-carboxamide = 5-[(5-phospho-1-deoxy-D-ribulos-1-ylimino)methylamino]-1-(5-phospho-beta-D-ribosyl)imidazole-4-carboxamide. It participates in amino-acid biosynthesis; L-histidine biosynthesis; L-histidine from 5-phospho-alpha-D-ribose 1-diphosphate: step 4/9. The protein is 1-(5-phosphoribosyl)-5-[(5-phosphoribosylamino)methylideneamino] imidazole-4-carboxamide isomerase of Methanosphaera stadtmanae (strain ATCC 43021 / DSM 3091 / JCM 11832 / MCB-3).